A 1256-amino-acid polypeptide reads, in one-letter code: MSDDNNSNNMSNNNNNNNNNNNNNNNNNNNNNNNNNNNSNNNNSNNNNENNNNKSFQIQPILIQISEILQQSIELKLCSSVNTHNVFWDTLLYNLELNGDAISMIISLLLTKYILLLNNENNQYSLLQALFTKLTNASVEEFNDLLNGNNSNNNSNNNNNNNNNNNNNNNNNNNNNNNNNNNNNNNNNNNNNNNNNNNNNNNNSNGNNINTSNGNEDDVEQQTESTEQDFTSTSQNSTPSISRLASKLSQTDLDSFNLSISETNLTGVNYSSVSPQQSSPPLISTSSTGSLSNDYININNNNNSNSNININTSGTNDSDSTTTFSINGINMSSEEIKESETIRLSILSTIGYLSLFHKFNPQFPTLKVIIHKLGEIQLEKSRFEYSLHNEVLRILQTNNQDNNDFLFFLIDQCSDQNSSNLDNLKLNNNINKINSWYNPSIRKILREESVSKSKAVFEHLLLFLKHPLLSEKRVLFLLQMLKHYLLVIPVLSSLTIQSALSIVKTYYLWPKPYGCFAKEILEILSLELKSPGSYFRNILAREFPSIMSSPNSIGSASLTNTLFTNKNRPTIHFLVDKYNSEALLIQELFEANYNTYTPSITQLQSNNIENIYKRILGIDNSQLGIEFLEPIDVSTIHFKILDVMNKTMYLEENESKSIRIKELISIRDEIIKFCNLSTNSNSNLNSTTTTATTTNILKHVPKNIELPNLNYQFISMLTLSVRHKRPDQFGTPFYIPINRKSTTSLIDLLSNYQDQDFHNQVKFAIIGNDTSVQHILASYLFLKYQQPELFHSLDIMFYIIPTGTSNCKIAELISSFDPWYTNQVRQCLVSLYSIIPSFPPISKLSKIERQSFIESISQIKDLRNSIALKENELEQQQQQQPQQPQQQNSDVASIILNEQQQQQQQQQSNLNNSNNEIKNDINSSTTAATTTTTTTTTTTTTTIHKDNPVETPSHTIQTEIEYLFREASFSLEIPVLKCEGWGIDDNNYFTIPFLMKAEMNTSTFLAGFSDLISSDPTQINKLMGKYSPMNVNIKILQCNQMGVPLQWINIDNKTFYDIEINNIMPKSISHPTIQSTSSPSTSSSNNNNSTTTATNNNGNNGNNNNGNGNNNNNNNNNNNNNNNNNNNNNNGPATISSSLKKSIIQSKPKMQLVLIEAEQKKKKVKSSEDTFKFTINAIEMESIDKKKSFDILLDGQLHGPFNKIKISFCSSNISNIINNAAKNSSSSNSSNYSIGFNDLQDNDFITFPIMSFLPLV.

Disordered regions lie at residues 1–53 (MSDD…NNNN), 145–243 (LLNG…SISR), 898–951 (EQQQ…PVET), and 1069–1136 (SHPT…ATIS). A compositionally biased stretch (low complexity) spans 147-214 (NGNNSNNNSN…NGNNINTSNG (68 aa)). Residues 222 to 243 (QTESTEQDFTSTSQNSTPSISR) are compositionally biased toward polar residues. Composition is skewed to low complexity over residues 898-916 (EQQQQQQQQQSNLNNSNNE) and 925-942 (TTAATTTTTTTTTTTTTT). Residues 1069–1079 (SHPTIQSTSSP) show a composition bias toward polar residues. Positions 1080–1136 (STSSSNNNNSTTTATNNNGNNGNNNNGNGNNNNNNNNNNNNNNNNNNNNNNGPATIS) are enriched in low complexity.

This is Putative protein DDB_G0292252 from Dictyostelium discoideum (Social amoeba).